The primary structure comprises 181 residues: Transcription antitermination protein NusB (181 aa).

The interval 1–36 (MTEDNNKAAGAKPRPARQVRTGLTSTGARKASAKSN) is disordered.

This sequence belongs to the NusB family.

In terms of biological role, involved in transcription antitermination. Required for transcription of ribosomal RNA (rRNA) genes. Binds specifically to the boxA antiterminator sequence of the ribosomal RNA (rrn) operons. In Variovorax paradoxus (strain S110), this protein is Transcription antitermination protein NusB.